The chain runs to 466 residues: Asparagine--tRNA ligase (466 aa).

The protein belongs to the class-II aminoacyl-tRNA synthetase family. In terms of assembly, homodimer.

Its subcellular location is the cytoplasm. The catalysed reaction is tRNA(Asn) + L-asparagine + ATP = L-asparaginyl-tRNA(Asn) + AMP + diphosphate + H(+). The polypeptide is Asparagine--tRNA ligase (Colwellia psychrerythraea (strain 34H / ATCC BAA-681) (Vibrio psychroerythus)).